Reading from the N-terminus, the 479-residue chain is Cardiolipin synthase A (479 aa).

The next 2 helical transmembrane spans lie at 8-28 (IFGYLIALLHFLGLIAAIHAV) and 38-58 (IAWALSLLFMPYLTLIPYLVF). PLD phosphodiesterase domains are found at residues 218 to 245 (VNFRNHRKIVVVDGMLGFVGGHNVGDEY) and 392 to 419 (QPGFLHQKVVLIDNEISAIGSANLDNRS). Active-site residues include histidine 223, lysine 225, aspartate 230, histidine 397, lysine 399, and aspartate 404.

Belongs to the phospholipase D family. Cardiolipin synthase subfamily. ClsA sub-subfamily.

It localises to the cell inner membrane. It carries out the reaction 2 a 1,2-diacyl-sn-glycero-3-phospho-(1'-sn-glycerol) = a cardiolipin + glycerol. Its function is as follows. Catalyzes the reversible phosphatidyl group transfer from one phosphatidylglycerol molecule to another to form cardiolipin (CL) (diphosphatidylglycerol) and glycerol. This is Cardiolipin synthase A from Pseudomonas fluorescens (strain ATCC BAA-477 / NRRL B-23932 / Pf-5).